We begin with the raw amino-acid sequence, 802 residues long: Mitogen-activated protein kinase kinase kinase 20 (802 aa).

Residue serine 2 is modified to N-acetylserine. Phosphoserine is present on residues serine 2, serine 3, and serine 7. One can recognise a Protein kinase domain in the interval 16–277 (LQFFENCGGG…NLPDQCNSFL (262 aa)). ATP is bound by residues 22–30 (CGGGSFGSV) and lysine 45. Aspartate 133 acts as the Proton acceptor in catalysis. At threonine 161 the chain carries Phosphothreonine; by autocatalysis. Residue serine 165 is modified to Phosphoserine; by autocatalysis. A phosphoserine mark is found at serine 275 and serine 302. The interval 287–308 (IEATLERLKKLERDLSFKEQEL) is leucine-zipper. An SAM domain is found at 339-410 (WTEDDVYFWV…KSAIEKLTHD (72 aa)). Phosphoserine is present on residues lysine 434, glutamine 453, and serine 567. Threonine 586 bears the Phosphothreonine mark. Phosphoserine occurs at positions 587, 593, and 599. Residues 624 to 642 (YQQITPSINPSRSSSPTQY) are compositionally biased toward polar residues. The segment at 624-802 (YQQITPSINP…RGNYRGRRNF (179 aa)) is disordered. Residue threonine 628 is modified to Phosphothreonine. Phosphoserine occurs at positions 634, 638, 649, 650, and 661. Over residues 643–666 (GLSRNFSSLNLSSRDSGFSSLNDS) the composition is skewed to low complexity. Basic and acidic residues predominate over residues 667–678 (SSERGRYSDRSR). Residues 670–713 (RGRYSDRSRNKYYRGSVSLNSSPKGRYGGKSQHSTPSRERYSGK) form a sensing domain (S) region. Phosphoserine is present on residues serine 685, serine 720, serine 727, and serine 733. Residues 728 to 741 (PDFKRSPNDHDRRV) are compositionally biased toward basic and acidic residues. Phosphothreonine is present on threonine 744. The segment at 776 to 802 (RKKTHRQLSAKTSKERTRGNYRGRRNF) is C-terminal domain (CTD).

The protein belongs to the protein kinase superfamily. STE Ser/Thr protein kinase family. MAP kinase kinase kinase subfamily. As to quaternary structure, homodimer. Interacts with ZNF33A. Component of a signaling complex containing at least AKAP13, PKN1, MAPK14, MAP3K20 and MAP2K3. Within this complex, AKAP13 interacts directly with PKN1, which in turn recruits MAPK14, MAP2K3 and MAP3K20. Interacts with EIF2AK4/GCN2; promoting EIF2AK4/GCN2 kinase activity. In terms of assembly, interacts with isoform ZAKbeta. Interacts with isoform ZAKalpha. It depends on Mg(2+) as a cofactor. Activated by phosphorylation by PKN1, followed by autophosphorylation on Thr-161 and Ser-165. Autophosphorylation in response to ribotoxic stress promotes dissociation from colliding ribosomes and activation.

The protein resides in the cytoplasm. The protein localises to the nucleus. It catalyses the reaction L-seryl-[protein] + ATP = O-phospho-L-seryl-[protein] + ADP + H(+). The enzyme catalyses L-threonyl-[protein] + ATP = O-phospho-L-threonyl-[protein] + ADP + H(+). Its activity is regulated as follows. Activated in response to stress, such as ribosomal stress, osmotic shock and ionizing radiation. Activated by phosphorylation by PKN1, followed by autophosphorylation on Thr-161 and Ser-165. In terms of biological role, stress-activated component of a protein kinase signal transduction cascade that promotes programmed cell death in response to various stress, such as ribosomal stress, osmotic shock and ionizing radiation. Acts by catalyzing phosphorylation of MAP kinase kinases, leading to activation of the JNK (MAPK8/JNK1, MAPK9/JNK2 and/or MAPK10/JNK3) and MAP kinase p38 (MAPK11, MAPK12, MAPK13 and/or MAPK14) pathways. Activates JNK through phosphorylation of MAP2K4/MKK4 and MAP2K7/MKK7, and MAP kinase p38 gamma (MAPK12) via phosphorylation of MAP2K3/MKK3 and MAP2K6/MKK6. Involved in stress associated with adrenergic stimulation: contributes to cardiac decompensation during periods of acute cardiac stress. May be involved in regulation of S and G2 cell cycle checkpoint by mediating phosphorylation of CHEK2. Key component of the stress-activated protein kinase signaling cascade in response to ribotoxic stress or UV-B irradiation. Acts as the proximal sensor of ribosome collisions during the ribotoxic stress response (RSR). Directly binds to the ribosome by inserting its flexible C-terminus into the ribosomal intersubunit space, thereby acting as a sentinel for colliding ribosomes. Upon ribosome collisions, activates either the stress-activated protein kinase signal transduction cascade or the integrated stress response (ISR), leading to programmed cell death or cell survival, respectively. Dangerous levels of ribosome collisions trigger the autophosphorylation and activation of MAP3K20, which dissociates from colliding ribosomes and phosphorylates MAP kinase kinases, leading to activation of the JNK and MAP kinase p38 pathways that promote programmed cell death. Less dangerous levels of ribosome collisions trigger the integrated stress response (ISR): MAP3K20 activates EIF2AK4/GCN2 independently of its protein-kinase activity, promoting EIF2AK4/GCN2-mediated phosphorylation of EIF2S1/eIF-2-alpha. Also acts as a histone kinase by phosphorylating histone H3 at 'Ser-28' (H3S28ph). Its function is as follows. Isoform that lacks the C-terminal region that mediates ribosome-binding: does not act as a sensor of ribosome collisions in response to ribotoxic stress. May act as an antagonist of isoform ZAKalpha: interacts with isoform ZAKalpha, leading to decrease the expression of isoform ZAKalpha. This chain is Mitogen-activated protein kinase kinase kinase 20, found in Mus musculus (Mouse).